The sequence spans 248 residues: Probable transcriptional regulatory protein Ecaj_0351 (248 aa).

Residues Met1–Arg21 are disordered.

Belongs to the TACO1 family.

Its subcellular location is the cytoplasm. This Ehrlichia canis (strain Jake) protein is Probable transcriptional regulatory protein Ecaj_0351.